A 304-amino-acid polypeptide reads, in one-letter code: D-alanine--D-alanine ligase (304 aa).

One can recognise an ATP-grasp domain in the interval 103–299 (KLIWQALGLP…FADLCIEILK (197 aa)). 129–184 (EEKLGLPMFVKPAAEGSSVGVVKVKGKGRLKSVYEELKHFQGEIIAERFIGGGEYS) lines the ATP pocket. Residues Asp-253, Glu-266, and Asn-268 each coordinate Mg(2+).

The protein belongs to the D-alanine--D-alanine ligase family. It depends on Mg(2+) as a cofactor. Requires Mn(2+) as cofactor.

It localises to the cytoplasm. The enzyme catalyses 2 D-alanine + ATP = D-alanyl-D-alanine + ADP + phosphate + H(+). It functions in the pathway cell wall biogenesis; peptidoglycan biosynthesis. In terms of biological role, cell wall formation. This is D-alanine--D-alanine ligase from Neisseria meningitidis serogroup A / serotype 4A (strain DSM 15465 / Z2491).